A 363-amino-acid polypeptide reads, in one-letter code: Glycerol-3-phosphate dehydrogenase [NAD(+)], cytoplasmic (363 aa).

NAD(+)-binding positions include 11–16 (GSGNWG), Phe-98, Lys-121, and Ala-155. Position 121 (Lys-121) interacts with substrate. Lys-206 serves as the catalytic Proton acceptor. NAD(+) contacts are provided by Arg-270 and Gln-299. Residue 270 to 271 (RN) participates in substrate binding.

Belongs to the NAD-dependent glycerol-3-phosphate dehydrogenase family. In terms of assembly, homodimer. Isoform GPDH-1 is predominant in thorax and isoform GPDH-3 in abdomen.

Its subcellular location is the cytoplasm. It carries out the reaction sn-glycerol 3-phosphate + NAD(+) = dihydroxyacetone phosphate + NADH + H(+). The protein operates within phospholipid metabolism; alpha-glycerophosphate cycle. This Drosophila melanogaster (Fruit fly) protein is Glycerol-3-phosphate dehydrogenase [NAD(+)], cytoplasmic.